Consider the following 367-residue polypeptide: Probable peptidoglycan glycosyltransferase FtsW (367 aa).

Residues 1-8 lie on the Cytoplasmic side of the membrane; that stretch reads MRRVEGYD. A helical transmembrane segment spans residues 9 to 29; sequence MIVLMMAVILTCFGVVMVYSA. Topologically, residues 30–49 are periplasmic; it reads SSVMAAKKFHDGFFFLKRQS. A helical transmembrane segment spans residues 50–70; it reads LYALIGFIGMGVAMHVDYHVW. Over 71–72 the chain is Cytoplasmic; the sequence is KK. The helical transmembrane segment at 73 to 93 threads the bilayer; it reads WAVPLFLGTFFLLLLVFVPGI. Over 94–138 the chain is Periplasmic; that stretch reads GGTAKGASRWIRLPGFNFQPSELAKVALIMYMAYSLEKRQDKLKQ. The helical transmembrane segment at 139-159 threads the bilayer; sequence FMSGFFPYMLILGVFIAVLLA. The Cytoplasmic segment spans residues 160 to 161; it reads QH. Residues 162–182 form a helical membrane-spanning segment; it reads DMGAALTMLAVAIVMLFAAGT. A topological domain (periplasmic) is located at residue lysine 183. The chain crosses the membrane as a helical span at residues 184–204; that stretch reads VQYILGMGLVALPGICYLVFT. The Cytoplasmic portion of the chain corresponds to 205–225; sequence KAYRMRRITAFLDPWQDPTDA. Residues 226 to 246 form a helical membrane-spanning segment; the sequence is GFQIIQSWLALGTGGFFGQGL. At 247–266 the chain is on the periplasmic side; it reads GEGKQKLFYLPEAHTDFILS. Residues 267–287 traverse the membrane as a helical segment; it reads VLGEEMGFIGVVVIASMFLLL. The Cytoplasmic segment spans residues 288–304; sequence VQRSIRVAIAAEDSFGR. Residues 305–325 form a helical membrane-spanning segment; the sequence is FLAFGIAILLGLEAFVNMAVV. Residues 326–335 are Periplasmic-facing; sequence TGLLPTKGIA. Residues 336–356 form a helical membrane-spanning segment; the sequence is LPFLSYGGSSLIISLCSVGVL. At 357–367 the chain is on the cytoplasmic side; sequence LNVSTRMRGAA.

Belongs to the SEDS family. FtsW subfamily.

It is found in the cell inner membrane. The enzyme catalyses [GlcNAc-(1-&gt;4)-Mur2Ac(oyl-L-Ala-gamma-D-Glu-L-Lys-D-Ala-D-Ala)](n)-di-trans,octa-cis-undecaprenyl diphosphate + beta-D-GlcNAc-(1-&gt;4)-Mur2Ac(oyl-L-Ala-gamma-D-Glu-L-Lys-D-Ala-D-Ala)-di-trans,octa-cis-undecaprenyl diphosphate = [GlcNAc-(1-&gt;4)-Mur2Ac(oyl-L-Ala-gamma-D-Glu-L-Lys-D-Ala-D-Ala)](n+1)-di-trans,octa-cis-undecaprenyl diphosphate + di-trans,octa-cis-undecaprenyl diphosphate + H(+). It participates in cell wall biogenesis; peptidoglycan biosynthesis. In terms of biological role, peptidoglycan polymerase that is essential for cell division. This Geobacter sp. (strain M18) protein is Probable peptidoglycan glycosyltransferase FtsW.